The primary structure comprises 336 residues: Holliday junction branch migration complex subunit RuvB (336 aa).

The large ATPase domain (RuvB-L) stretch occupies residues Ala-4–Tyr-184. ATP contacts are provided by residues Ile-23, Arg-24, Gly-65, Lys-68, Thr-69, Thr-70, Glu-131 to Tyr-133, Arg-174, Tyr-184, and Arg-221. Residue Thr-69 participates in Mg(2+) binding. Residues Gln-185–Asn-255 are small ATPAse domain (RuvB-S). Residues Ala-258–Pro-336 are head domain (RuvB-H). Residues Arg-294, Arg-313, and Arg-318 each coordinate DNA.

This sequence belongs to the RuvB family. As to quaternary structure, homohexamer. Forms an RuvA(8)-RuvB(12)-Holliday junction (HJ) complex. HJ DNA is sandwiched between 2 RuvA tetramers; dsDNA enters through RuvA and exits via RuvB. An RuvB hexamer assembles on each DNA strand where it exits the tetramer. Each RuvB hexamer is contacted by two RuvA subunits (via domain III) on 2 adjacent RuvB subunits; this complex drives branch migration. In the full resolvosome a probable DNA-RuvA(4)-RuvB(12)-RuvC(2) complex forms which resolves the HJ.

It localises to the cytoplasm. The catalysed reaction is ATP + H2O = ADP + phosphate + H(+). Functionally, the RuvA-RuvB-RuvC complex processes Holliday junction (HJ) DNA during genetic recombination and DNA repair, while the RuvA-RuvB complex plays an important role in the rescue of blocked DNA replication forks via replication fork reversal (RFR). RuvA specifically binds to HJ cruciform DNA, conferring on it an open structure. The RuvB hexamer acts as an ATP-dependent pump, pulling dsDNA into and through the RuvAB complex. RuvB forms 2 homohexamers on either side of HJ DNA bound by 1 or 2 RuvA tetramers; 4 subunits per hexamer contact DNA at a time. Coordinated motions by a converter formed by DNA-disengaged RuvB subunits stimulates ATP hydrolysis and nucleotide exchange. Immobilization of the converter enables RuvB to convert the ATP-contained energy into a lever motion, pulling 2 nucleotides of DNA out of the RuvA tetramer per ATP hydrolyzed, thus driving DNA branch migration. The RuvB motors rotate together with the DNA substrate, which together with the progressing nucleotide cycle form the mechanistic basis for DNA recombination by continuous HJ branch migration. Branch migration allows RuvC to scan DNA until it finds its consensus sequence, where it cleaves and resolves cruciform DNA. The protein is Holliday junction branch migration complex subunit RuvB of Salmonella agona (strain SL483).